The sequence spans 183 residues: Peptide deformylase (183 aa).

Residues Cys-111 and His-154 each coordinate Fe cation. Residue Glu-155 is part of the active site. His-158 lines the Fe cation pocket.

Fe(2+) serves as cofactor.

It catalyses the reaction N-terminal N-formyl-L-methionyl-[peptide] + H2O = N-terminal L-methionyl-[peptide] + formate. Its function is as follows. Removes the formyl group from the N-terminal Met of newly synthesized proteins. Requires at least a dipeptide for an efficient rate of reaction. N-terminal L-methionine is a prerequisite for activity but the enzyme has broad specificity at other positions. This Staphylococcus aureus protein is Peptide deformylase.